We begin with the raw amino-acid sequence, 397 residues long: Stearoyl-[acyl-carrier-protein] 9-desaturase, chloroplastic (397 aa).

Residues 1 to 33 constitute a chloroplast transit peptide; the sequence is MALNFNAIASKSQKLPCFALPPKATLRSPKFSM. E138, E176, H179, E229, E262, and H265 together coordinate Fe cation.

This sequence belongs to the fatty acid desaturase type 2 family. As to quaternary structure, homodimer. Requires Fe(2+) as cofactor.

Its subcellular location is the plastid. It is found in the chloroplast. It catalyses the reaction octadecanoyl-[ACP] + 2 reduced [2Fe-2S]-[ferredoxin] + O2 + 2 H(+) = (9Z)-octadecenoyl-[ACP] + 2 oxidized [2Fe-2S]-[ferredoxin] + 2 H2O. It participates in lipid metabolism; fatty acid metabolism. Its function is as follows. Converts stearoyl-ACP to oleoyl-ACP by introduction of a cis double bond between carbons 9 and 10 of the acyl chain. This Gossypium hirsutum (Upland cotton) protein is Stearoyl-[acyl-carrier-protein] 9-desaturase, chloroplastic.